The following is a 620-amino-acid chain: Dopamine beta-hydroxylase (620 aa).

Residues 1–19 (MQPHLSHQPCWSLPSPSVR) are Cytoplasmic-facing. The chain crosses the membrane as a helical; Signal-anchor for type II membrane protein span at residues 20 to 40 (EAASMYGTAVAIFLVILVAAL). Residues 41–620 (QGSEPPESPF…FVVITHGGRH (580 aa)) lie on the Intragranular side of the membrane. Residues 60 to 176 (GTLELSWNVS…DTVHLVYGIL (117 aa)) enclose the DOMON domain. N-linked (GlcNAc...) asparagine glycans are attached at residues asparagine 67 and asparagine 187. Cystine bridges form between cysteine 157-cysteine 599, cysteine 235-cysteine 286, cysteine 272-cysteine 298, cysteine 393-cysteine 506, cysteine 397-cysteine 568, and cysteine 469-cysteine 491. Tyrosine 233 is a catalytic residue. The Cu(2+) site is built by histidine 265 and histidine 266. Residue asparagine 274 is glycosylated (N-linked (GlcNAc...) asparagine). Histidine 336 contributes to the Cu(2+) binding site. At serine 349 the chain carries Phosphoserine; by CaMK. Histidine 415 is a catalytic residue. 2 residues coordinate Cu(2+): histidine 415 and histidine 417. N-linked (GlcNAc...) asparagine glycosylation is present at asparagine 475. Methionine 490 is a Cu(2+) binding site. Asparagine 569 and asparagine 587 each carry an N-linked (GlcNAc...) asparagine glycan.

Belongs to the copper type II ascorbate-dependent monooxygenase family. As to quaternary structure, homotetramer; composed of two disulfide-linked dimers. The cofactor is Cu(2+). Post-translationally, proteolytic cleavage after the membrane-anchor leads to the release of the soluble form. N-glycosylated. In terms of tissue distribution, chromaffin granules of the adrenal medulla and synaptic vesicles of the sympathetic nervous system.

The protein localises to the cytoplasmic vesicle. The protein resides in the secretory vesicle lumen. It localises to the secretory vesicle. Its subcellular location is the chromaffin granule lumen. It is found in the secreted. The protein localises to the secretory vesicle membrane. The protein resides in the chromaffin granule membrane. The enzyme catalyses dopamine + 2 L-ascorbate + O2 = (R)-noradrenaline + 2 monodehydro-L-ascorbate radical + H2O. The protein operates within catecholamine biosynthesis; (R)-noradrenaline biosynthesis; (R)-noradrenaline from dopamine: step 1/1. In terms of biological role, catalyzes the hydroxylation of dopamine to noradrenaline (also known as norepinephrine), and is thus vital for regulation of these neurotransmitters. This is Dopamine beta-hydroxylase (Dbh) from Rattus norvegicus (Rat).